Here is a 938-residue protein sequence, read N- to C-terminus: Glutamate receptor ionotropic, NMDA 1 (938 aa).

A signal peptide spans 1–18; the sequence is MSTMHLLTFALLFSCSFA. Residues 19–559 lie on the Extracellular side of the membrane; it reads RAACDPKIVN…TLDSFMQPFQ (541 aa). 10 N-linked (GlcNAc...) asparagine glycosylation sites follow: N61, N203, N239, N276, N300, N350, N368, N440, N471, and N491. An intrachain disulfide couples C79 to C308. 2 disulfides stabilise this stretch: C420–C454 and C436–C455. Glycine contacts are provided by P516, T518, and R523. A helical transmembrane segment spans residues 560–580; sequence STLWLLVGLSVHVVAVMLYLL. Topologically, residues 581–602 are cytoplasmic; the sequence is DRFSPFGRFKVNSEEEEEDALT. Positions 603–624 form an intramembrane region, discontinuously helical; sequence LSSAMWFSWGVLLNSGIGEGAP. Residues 603–624 are pore-forming; sequence LSSAMWFSWGVLLNSGIGEGAP. The Cytoplasmic segment spans residues 625–630; the sequence is RSFSAR. The chain crosses the membrane as a helical span at residues 631–647; it reads ILGMVWAGFAMIIVASY. Over 648–812 the chain is Extracellular; that stretch reads TANLAAFLVL…NAPATLTFEN (165 aa). N674 is a glycosylation site (N-linked (GlcNAc...) asparagine). Positions 688 and 732 each coordinate glycine. A disulfide bridge connects residues C744 and C798. N-linked (GlcNAc...) asparagine glycosylation is present at N771. A helical membrane pass occupies residues 813–833; sequence MAGVFMLVAGGIVAGIFLIFI. Topologically, residues 834–938 are cytoplasmic; sequence EIAYKRHKDA…LQLCSRHRES (105 aa). Position 889 is a phosphoserine; by PKC (S889). Positions 889 to 938 are disordered; sequence SSFKRRRSSKDTSTGGGRGALQNQKDTVLPRRAIEREEGQLQLCSRHRES. Phosphoserine is present on S890. A phosphoserine; by PKC mark is found at S896 and S897. The span at 916-927 shows a compositional bias: basic and acidic residues; sequence VLPRRAIEREEG.

It belongs to the glutamate-gated ion channel (TC 1.A.10.1) family. NR1/GRIN1 subfamily. Heterotetramer; the NMDAR subunits are modular and harbor tiered domains that function in concert to regulate opening and closing of the cation-selective ion channel pore. Forms heterotetrameric channels composed of two GluN1/zeta subunits (GRIN1), and two identical GluN2/epsilon subunits (GRIN2A, GRIN2B, GRIN2C or GRIN2D) or GluN3 subunits (GRIN3A or GRIN3B) (in vitro). Can also form heterotetrameric channels that contain at least two GluN1 subunits and at least two different GluN2 subunits (or a combination of one GluN2 and one GluN3 subunits) (in vitro). In vivo, the subunit composition may vary in function of the expression levels of the different subunits. Found in a complex with GRIN2A or GRIN2B, GRIN3A and PPP2CB. Found in a complex with GRIN2A or GRIN2B and GRIN3B. Interacts with SNX27 (via PDZ domain); the interaction is required for recycling to the plasma membrane when endocytosed and prevent degradation in lysosomes. Interacts with DLG4 and MPDZ. Interacts with LRFN1 and LRFN2. Interacts with MYZAP. Found in a complex with DLG4 and PRR7. Found in a complex with GRIN2B and PRR7. Interacts with PRR7; the interaction is reduced following NMDA receptor activity. Post-translationally, NMDA is probably regulated by C-terminal phosphorylation of an isoform of GRIN1 by PKC. Dephosphorylated on Ser-897 probably by protein phosphatase 2A (PPP2CB). Its phosphorylated state is influenced by the formation of the NMDAR-PPP2CB complex and the NMDAR channel activity. Detected in brain (at protein level). Detected in brain.

The protein resides in the cell membrane. It localises to the postsynaptic cell membrane. It is found in the postsynaptic density membrane. Its subcellular location is the synaptic cell membrane. It carries out the reaction Ca(2+)(in) = Ca(2+)(out). The enzyme catalyses Na(+)(in) = Na(+)(out). It catalyses the reaction K(+)(in) = K(+)(out). Component of N-methyl-D-aspartate (NMDA) receptors (NMDARs) that function as heterotetrameric, ligand-gated cation channels with high calcium permeability and voltage-dependent block by Mg(2+). NMDARs participate in synaptic plasticity for learning and memory formation by contributing to the long-term potentiation (LTP). Channel activation requires binding of the neurotransmitter L-glutamate to the GluN2 subunit, glycine or D-serine binding to the GluN1 subunit, plus membrane depolarization to eliminate channel inhibition by Mg(2+). NMDARs mediate simultaneously the potasium efflux and the influx of calcium and sodium. Each GluN2 or GluN3 subunit confers differential attributes to channel properties, including activation, deactivation and desensitization kinetics, pH sensitivity, Ca2(+) permeability, and binding to allosteric modulators. This is Glutamate receptor ionotropic, NMDA 1 from Mus musculus (Mouse).